We begin with the raw amino-acid sequence, 355 residues long: Alanine racemase (355 aa).

The Proton acceptor; specific for D-alanine role is filled by K34. K34 is subject to N6-(pyridoxal phosphate)lysine. R133 contributes to the substrate binding site. Y249 functions as the Proton acceptor; specific for L-alanine in the catalytic mechanism. M297 contributes to the substrate binding site.

It belongs to the alanine racemase family. Pyridoxal 5'-phosphate is required as a cofactor.

The enzyme catalyses L-alanine = D-alanine. It functions in the pathway amino-acid biosynthesis; D-alanine biosynthesis; D-alanine from L-alanine: step 1/1. Catalyzes the interconversion of L-alanine and D-alanine. May also act on other amino acids. In Rickettsia conorii (strain ATCC VR-613 / Malish 7), this protein is Alanine racemase (alr).